Consider the following 314-residue polypeptide: tRNA dimethylallyltransferase (314 aa).

9 to 16 (GPTAVGKT) is an ATP binding site. Substrate is bound at residue 11 to 16 (TAVGKT). The interaction with substrate tRNA stretch occupies residues 34–37 (DSVQ).

This sequence belongs to the IPP transferase family. In terms of assembly, monomer. Mg(2+) is required as a cofactor.

It catalyses the reaction adenosine(37) in tRNA + dimethylallyl diphosphate = N(6)-dimethylallyladenosine(37) in tRNA + diphosphate. Its function is as follows. Catalyzes the transfer of a dimethylallyl group onto the adenine at position 37 in tRNAs that read codons beginning with uridine, leading to the formation of N6-(dimethylallyl)adenosine (i(6)A). This chain is tRNA dimethylallyltransferase, found in Desulfitobacterium hafniense (strain DSM 10664 / DCB-2).